A 309-amino-acid chain; its full sequence is Taste receptor type 2 member 8 (309 aa).

Residues 1–7 (MFSPADN) are Extracellular-facing. A helical transmembrane segment spans residues 8 to 28 (IFIILITGEFILGILGNGYIA). Topologically, residues 29–50 (LVNWIDWIKKKKISTVDYILTN) are cytoplasmic. A helical transmembrane segment spans residues 51–71 (LVIARICLISVMVVNGIVIVL). The Extracellular portion of the chain corresponds to 72–82 (NPDVYTKNKQQ). Residues 83–103 (IVIFTFWTFANYLNMWITTCL) traverse the membrane as a helical segment. The Cytoplasmic portion of the chain corresponds to 104-131 (NVFYFLKIASSSHPLFLWLKWKIDMVVH). A helical transmembrane segment spans residues 132-152 (WILLGCFAISLLVSLIAAIVL). The Extracellular portion of the chain corresponds to 153–184 (SCDYRFHAIAKHKRNITEMFHVSKXPYFEPLT). A glycan (N-linked (GlcNAc...) asparagine) is linked at N167. The chain crosses the membrane as a helical span at residues 185–205 (LFNLFAIVPFIVSLISFFLLV). At 206 to 239 (RSLWRHTKQIKLYATGSRDPSTEVHVRAIKTMTS) the chain is on the cytoplasmic side. The helical transmembrane segment at 240 to 260 (FIFFFFLYFISSILMTFSYLM) threads the bilayer. At 261–266 (TKYKLA) the chain is on the extracellular side. Residues 267-287 (VEFGEIAAILYPLGHSLILIV) traverse the membrane as a helical segment. At 288-309 (LNNKLRQIFVRMLTCRKIACVI) the chain is on the cytoplasmic side.

It belongs to the G-protein coupled receptor T2R family.

The protein localises to the membrane. Functionally, receptor that may play a role in the perception of bitterness and is gustducin-linked. May play a role in sensing the chemical composition of the gastrointestinal content. The activity of this receptor may stimulate alpha gustducin, mediate PLC-beta-2 activation and lead to the gating of TRPM5. The polypeptide is Taste receptor type 2 member 8 (TAS2R8) (Pan paniscus (Pygmy chimpanzee)).